Here is a 195-residue protein sequence, read N- to C-terminus: Putative manganese efflux pump MntP (195 aa).

6 helical membrane-spanning segments follow: residues 3–23 (LSAT…ASVG), 40–60 (GLIF…LGLL), 68–88 (WDHW…VLAG), 106–126 (VLIA…VGLA), 132–152 (ILHA…IGML), and 165–185 (AEII…YSHI).

This sequence belongs to the MntP (TC 9.B.29) family.

It localises to the cell inner membrane. Its function is as follows. Probably functions as a manganese efflux pump. The sequence is that of Putative manganese efflux pump MntP from Sodalis glossinidius (strain morsitans).